We begin with the raw amino-acid sequence, 306 residues long: ATP synthase gamma chain (306 aa).

It belongs to the ATPase gamma chain family. F-type ATPases have 2 components, CF(1) - the catalytic core - and CF(0) - the membrane proton channel. CF(1) has five subunits: alpha(3), beta(3), gamma(1), delta(1), epsilon(1). CF(0) has three main subunits: a, b and c.

The protein resides in the cell membrane. Produces ATP from ADP in the presence of a proton gradient across the membrane. The gamma chain is believed to be important in regulating ATPase activity and the flow of protons through the CF(0) complex. This chain is ATP synthase gamma chain, found in Bifidobacterium animalis subsp. lactis (strain AD011).